Consider the following 127-residue polypeptide: Large ribosomal subunit protein bL12 (127 aa).

Belongs to the bacterial ribosomal protein bL12 family. As to quaternary structure, homodimer. Part of the ribosomal stalk of the 50S ribosomal subunit. Forms a multimeric L10(L12)X complex, where L10 forms an elongated spine to which 2 to 4 L12 dimers bind in a sequential fashion. Binds GTP-bound translation factors.

Functionally, forms part of the ribosomal stalk which helps the ribosome interact with GTP-bound translation factors. Is thus essential for accurate translation. In Acidiphilium cryptum (strain JF-5), this protein is Large ribosomal subunit protein bL12.